We begin with the raw amino-acid sequence, 296 residues long: MAAGGPGAGSAAPVSSTSSLPLAALNMRVRRRLSLFLNVRTQVAADWTALAEEMDFEYLEIRQLETQADPTGRLLDAWQGRPGASVGRLLELLTKLGRDDVLLELGPSIEEDCQKYILKQQQEEAEKPLQVAAVDSSVPRTAELAGITTLDDPLGHMPERFDAFICYCPSDIQFVQEMIRQLEQTNYRLKLCVSDRDVLPGTCVWSIASELIEKRCRRMVVVVSDDYLQSKECDFQTKFALSLSPGAHQKRLIPIKYKAMKKEFPSILRFITVCDYTNPCTKSWFWTRLAKALSLP.

Residues 54 to 109 form the Death domain; the sequence is MDFEYLEIRQLETQADPTGRLLDAWQGRPGASVGRLLELLTKLGRDDVLLELGPSI. An intermediate domain region spans residues 110 to 155; sequence EEDCQKYILKQQQEEAEKPLQVAAVDSSVPRTAELAGITTLDDPLG. In terms of domain architecture, TIR spans 159-293; that stretch reads ERFDAFICYC…WFWTRLAKAL (135 aa). Serine 244 carries the phosphoserine modification.

As to quaternary structure, homodimer. Also forms heterodimers with TIRAP. Binds to TLR2, TLR5, IRAK1, IRAK2 and IRAK4 via their respective TIR domains. Interacts with IL18R1. Interacts with BMX, IL1RL1, IKBKE and IRF7. Interacts with LRRFIP1 and LRRFIP2; this interaction positively regulates Toll-like receptor (TLR) signaling in response to agonist. Interacts with FLII. LRRFIP1 and LRRFIP2 compete with FLII for MYD88-binding. Interacts with IRF1. Upon IL1B treatment, forms a complex with PELI1, IRAK1, IRAK4 and TRAF6; this complex recruits MAP3K7/TAK1, TAB1 and TAB2 to mediate NF-kappa-B activation. Direct binding of SMAD6 to PELI1 prevents the complex formation and hence negatively regulates IL1R-TLR signaling and eventually NF-kappa-B-mediated gene expression. May interact with PIK3AP1. Interacts (via TIR domain) with DHX9 (via H2A and OB-fold regions); this interaction is direct. Interacts with OTUD4 deubiquitinase; the interaction is direct. Interacts with TLR4. (Microbial infection) In case of infection, interacts with uropathogenic E.coli protein TcpC; suppressing Toll-like receptor (TLR)-mediated cytokine production. In terms of assembly, (Microbial infection) In case of infection, interacts with uropathogenic E.faecalis protein TcpF; suppressing Toll-like receptor (TLR)-mediated cytokine production. As to quaternary structure, (Microbial infection) In case of infection, interacts with B.melitensis protein TcpB. (Microbial infection) Interacts with human metapneumovirus protein M2-2; this interaction prevents MYD88-mediated cytokine secretion. Ubiquitinated; undergoes 'Lys-63'-linked polyubiquitination. OTUD4 specifically hydrolyzes 'Lys-63'-linked polyubiquitinated MYD88. Deubiquitinated by USP3 that cleaves 'Lys-63'-linked ubiquitin chains leading to inhibition of MYD88-induced NF-kappa-B signaling. Post-translationally, (Microbial infection) Ubiquitinated by human herpesvirus 8 (KSHV) protein RTA/ORF50, leading to proteasomal degradation ans suppression of TLR4 signaling pathway. As to expression, ubiquitous.

It is found in the cytoplasm. Its subcellular location is the nucleus. Adapter protein involved in the Toll-like receptor and IL-1 receptor signaling pathway in the innate immune response. Acts via IRAK1, IRAK2, IRF7 and TRAF6, leading to NF-kappa-B activation, cytokine secretion and the inflammatory response. Increases IL-8 transcription. Involved in IL-18-mediated signaling pathway. Activates IRF1 resulting in its rapid migration into the nucleus to mediate an efficient induction of IFN-beta, NOS2/INOS, and IL12A genes. Upon TLR8 activation by GU-rich single-stranded RNA (GU-rich RNA) derived from viruses such as SARS-CoV-2, SARS-CoV and HIV-1, induces IL1B release through NLRP3 inflammasome activation. MyD88-mediated signaling in intestinal epithelial cells is crucial for maintenance of gut homeostasis and controls the expression of the antimicrobial lectin REG3G in the small intestine. The protein is Myeloid differentiation primary response protein MyD88 of Homo sapiens (Human).